The chain runs to 297 residues: HTH-type transcriptional regulator ArgP (297 aa).

The region spanning 4-60 (PDYRTLQALDAVIRERGFERAAQKLCITQSAVSQRIKQLENMFGQPLLVRTVPPRPT) is the HTH lysR-type domain. The H-T-H motif DNA-binding region spans 21 to 40 (FERAAQKLCITQSAVSQRIK).

Belongs to the LysR transcriptional regulatory family. In terms of assembly, homodimer.

Functionally, controls the transcription of genes involved in arginine and lysine metabolism. The chain is HTH-type transcriptional regulator ArgP from Salmonella choleraesuis (strain SC-B67).